The chain runs to 316 residues: tRNA dimethylallyltransferase (316 aa).

An ATP-binding site is contributed by 15 to 22; the sequence is GPTASGKS. 17–22 provides a ligand contact to substrate; the sequence is TASGKS. An interaction with substrate tRNA region spans residues 40–43; that stretch reads DSRQ.

Belongs to the IPP transferase family. As to quaternary structure, monomer. Mg(2+) serves as cofactor.

It catalyses the reaction adenosine(37) in tRNA + dimethylallyl diphosphate = N(6)-dimethylallyladenosine(37) in tRNA + diphosphate. Functionally, catalyzes the transfer of a dimethylallyl group onto the adenine at position 37 in tRNAs that read codons beginning with uridine, leading to the formation of N6-(dimethylallyl)adenosine (i(6)A). This is tRNA dimethylallyltransferase from Chlorobium limicola (strain DSM 245 / NBRC 103803 / 6330).